Reading from the N-terminus, the 1684-residue chain is Latrophilin Cirl (1684 aa).

The Extracellular segment spans residues 1-765; it reads MASNNYIQIM…LFTMFDGNMR (765 aa). In terms of domain architecture, SUEL-type lectin spans 21 to 110; sequence ACEGKKLTIE…KYLEAHYQCV (90 aa). N-linked (GlcNAc...) asparagine glycans are attached at residues N138, N251, N297, and N336. Residues 181 to 300 are disordered; the sequence is PPATHATPPG…GPSVSSNGSA (120 aa). 2 stretches are compositionally biased toward polar residues: residues 250-260 and 278-300; these read SNATAPSNTRI and KSSPNRTPGTAASGPSVSSNGSA. A disordered region spans residues 370-391; sequence SFDEDDEEMAGTSTTTPMSTSS. The span at 381-391 shows a compositional bias: low complexity; sequence TSTTTPMSTSS. N-linked (GlcNAc...) asparagine glycans are attached at residues N396, N653, N701, and N728. One can recognise a GAIN-B domain in the interval 559 to 752; it reads RSVVQKVKNI…AILMDVVDEH (194 aa). 2 disulfides stabilise this stretch: C707–C734 and C722–C736. The tract at residues 707-752 is GPS; that stretch reads CVFWNYIDHAWSANGCSLESTNRTHSVCSCNHLTNFAILMDVVDEH. A helical transmembrane segment spans residues 766–786; the sequence is IFIYISIAICVVFIVIALLTL. The Cytoplasmic segment spans residues 787-799; that stretch reads KLFNGVFVKSART. Residues 800–820 traverse the membrane as a helical segment; it reads SIYINIYICLLAIELLFLLGI. At 821-826 the chain is on the extracellular side; sequence EQTETS. The chain crosses the membrane as a helical span at residues 827-847; the sequence is IFCGFITVFLHCAILSGTSWF. Residues 848 to 873 lie on the Cytoplasmic side of the membrane; it reads CYEAFHSYSTLTSDELLLEVDQTPKV. Residues 874–894 traverse the membrane as a helical segment; it reads NCYYLLSYGLSLSVVAISLVI. The Extracellular portion of the chain corresponds to 895–918; the sequence is NPSTYTQNDYCVLMEANAVFYATF. Residues 919 to 939 traverse the membrane as a helical segment; the sequence is VAPVLIFFMAAIGYTFLSWII. Over 940-966 the chain is Cytoplasmic; it reads MCRKSRTGLKTKEHTRLATVRFDIRCS. A helical membrane pass occupies residues 967–987; sequence FVFFLLLSAVWCSAYFYLRGA. Topologically, residues 988–994 are extracellular; the sequence is KMDEDVT. Residues 995 to 1015 form a helical membrane-spanning segment; that stretch reads GIYGYNFICFNTLLGLYIFVF. Over 1016–1684 the chain is Cytoplasmic; sequence HCIQNEKIRR…VRCYLEPLAK (669 aa). The interval 1080-1100 is disordered; that stretch reads PLGTNDDAHDEQQQQQHMSAT. Residues S1156, S1247, and S1254 each carry the phosphoserine modification. 4 disordered regions span residues 1228–1255, 1270–1353, 1441–1520, and 1587–1669; these read KPNSQHGKKKRGGVGAIPASPSGSLHSR, KTKP…APPP, SRYG…LPPQ, and SMRG…SAML. The segment covering 1298–1314 has biased composition (low complexity); it reads QQQQQLRQQRQQQQQQL. 2 positions are modified to phosphoserine: S1315 and S1316. The segment covering 1328–1348 has biased composition (low complexity); sequence LHLQHQQQQQQQRRAGGQQQL. Polar residues predominate over residues 1455–1466; that stretch reads RNQQQQQHSLAQ. Acidic residues-rich tracts occupy residues 1476-1489 and 1499-1512; these read DEDDDEDEDDEETT and CDEEEEDEESDMED. A compositionally biased stretch (low complexity) spans 1631-1654; that stretch reads QQLQKLSPQSTTSSSSHTSHSNPH.

This sequence belongs to the G-protein coupled receptor 2 family. LN-TM7 subfamily. Forms a heterodimer, consisting of a large extracellular region non-covalently linked to a seven-transmembrane moiety. Post-translationally, proteolytically cleaved into 2 subunits, an extracellular subunit and a seven-transmembrane subunit.

The protein localises to the cell membrane. In Drosophila persimilis (Fruit fly), this protein is Latrophilin Cirl.